A 1148-amino-acid polypeptide reads, in one-letter code: Envelopment polyprotein (1148 aa).

A signal peptide spans 1–23 (MGELSPVCLCLLLQGLLLCNTGA). Over 24–496 (ARNLNELKME…PGLHGWATML (473 aa)) the chain is Lumenal. Cystine bridges form between Cys-34–Cys-159, Cys-68–Cys-165, Cys-117–Cys-136, Cys-141–Cys-146, Cys-183–Cys-193, and Cys-218–Cys-257. Residue Asn-142 is glycosylated (N-linked (GlcNAc...) asparagine; by host). Asn-357 is a glycosylation site (N-linked (GlcNAc...) asparagine; by host). 4 cysteine pairs are disulfide-bonded: Cys-386–Cys-445, Cys-390–Cys-399, Cys-415–Cys-434, and Cys-462–Cys-485. N-linked (GlcNAc...) asparagine; by host glycosylation is present at Asn-409. Residues 497–517 (LLLTFCFGWVLIPTITMILLK) traverse the membrane as a helical segment. Topologically, residues 518 to 637 (ILIAFAYLCS…LSLFRYRSRF (120 aa)) are cytoplasmic. The tract at residues 526-543 (CSKYNTDSKFRILIEKVK) is binding to the ribonucleoprotein. CCHC-type zinc fingers lie at residues 555 to 575 (CEVCQYECETAKELESHRKSC) and 580 to 601 (CPYCLNPSEATTSALQAHFKVC). Binding to the ribonucleoprotein regions lie at residues 598–615 (FKVCKLTSRFQENLRKSL), 602–613 (KLTSRFQENLRK), and 621–635 (MQGCYRTLSLFRYRS). The region spanning 621-644 (MQGCYRTLSLFRYRSRFFVGLVWC) is the ITAM domain. Residues 625–628 (YRTL) carry the YxxL motif. Residues 638-658 (FVGLVWCVLLVLELIVWAASA) traverse the membrane as a helical segment. Residues 659–1115 (ETQNLNAGWT…WILGVLNGNW (457 aa)) lie on the Lumenal side of the membrane. Disulfide bonds link Cys-745-Cys-780, Cys-749-Cys-787, Cys-761-Cys-894, Cys-775-Cys-905, Cys-790-Cys-913, Cys-816-Cys-825, Cys-833-Cys-842, and Cys-873-Cys-877. The interval 767 to 787 (YEYETGWGCNPPDCPGVGTGC) is fusion loop. Asn-937 carries N-linked (GlcNAc...) asparagine; by host glycosylation. Intrachain disulfides connect Cys-979/Cys-1009, Cys-1002/Cys-1054, Cys-1019/Cys-1024, Cys-1055/Cys-1060, and Cys-1094/Cys-1098. Residues 1116-1136 (MVVAVLVVLLILSILLFTLCC) traverse the membrane as a helical segment. Binding to the ribonucleoprotein regions lie at residues 1131-1143 (LFTLCCPRRPSYR) and 1131-1148 (LFTLCCPRRPSYRKEHKP). Over 1137–1148 (PRRPSYRKEHKP) the chain is Cytoplasmic.

The protein belongs to the hantavirus envelope glycoprotein family. Homodimer. Homotetramer; forms heterotetrameric Gn-Gc spikes in the pre-fusion conformation. Interacts (via C-terminus) with the nucleoprotein. Interacts with host TUFM; this interaction contributes to the virus-induced degradation of mitochondria by autophagy, which leads to degradation of host MAVS and inhibition of type I interferon (IFN) responses. Interacts with host MAP1LC3B; this interaction contributes to the virus-induced degradation of mitochondria by autophagy, which leads to degradation of host MAVS and inhibition of type I interferon (IFN) responses. In terms of assembly, homodimer. Homotetramer; forms heterotetrameric Gn-Gc spikes in the pre-fusion conformation. Homotrimer; forms homotrimer in the post-fusion conformation at acidic pH. Interacts (via C-terminus) with the nucleoprotein. In terms of processing, envelope polyprotein precursor is quickly cleaved in vivo just after synthesis, presumably by host signal peptidase.

It localises to the virion membrane. The protein resides in the host cell surface. The protein localises to the host Golgi apparatus membrane. Its subcellular location is the host endoplasmic reticulum membrane. It is found in the host mitochondrion. In terms of biological role, forms homotetramers with glycoprotein C at the surface of the virion. Attaches the virion to host cell receptors including integrin ITGAV/ITGB3. This attachment induces virion internalization predominantly through clathrin-dependent endocytosis. Mediates the assembly and budding of infectious virus particles through its interaction with the nucleocapsid protein and the viral genome. May dysregulate normal immune and endothelial cell responses through an ITAM motif. Translocates to mitochondria, binds to host TUFM and recruits MAP1LC3B. These interactions induce mitochondrial autophagy and therefore destruction of host MAVS leading to inhibition of type I interferon (IFN) responses. Concomitant breakdown of glycoprotein N is apparently prevented by the nucleoprotein that may inhibit Gn-stimulated autophagosome-lysosome fusion. Interacts with the viral genomic RNA. Functionally, forms homotetramers with glycoprotein N at the surface of the virion. Attaches the virion to host cell receptors including integrin ITGAV/ITGB3. This attachment induces virion internalization predominantly through clathrin-dependent endocytosis. Class II fusion protein that promotes fusion of viral membrane with host endosomal membrane after endocytosis of the virion. This is Envelopment polyprotein (GP) from Homo sapiens (Human).